The sequence spans 473 residues: Tyrosine phenol-lyase (473 aa).

An N6-(pyridoxal phosphate)lysine modification is found at Lys257.

It belongs to the beta-eliminating lyase family. In terms of assembly, homotetramer. Requires pyridoxal 5'-phosphate as cofactor.

The catalysed reaction is L-tyrosine + H2O = phenol + pyruvate + NH4(+). This chain is Tyrosine phenol-lyase, found in Intrasporangium calvum (strain ATCC 23552 / DSM 43043 / JCM 3097 / NBRC 12989 / NCIMB 10167 / NRRL B-3866 / 7 KIP).